Consider the following 146-residue polypeptide: Large ribosomal subunit protein uL15 (146 aa).

The segment covering 1–13 (MKLHELKPAEGSR) has biased composition (basic and acidic residues). The interval 1 to 56 (MKLHELKPAEGSRKVRNRVGRGAATGNGKTSGRGQKGQKARSGGSVRPGFEGGQLP) is disordered. A compositionally biased stretch (gly residues) spans 23 to 35 (AATGNGKTSGRGQ).

It belongs to the universal ribosomal protein uL15 family. As to quaternary structure, part of the 50S ribosomal subunit.

Binds to the 23S rRNA. In Staphylococcus saprophyticus subsp. saprophyticus (strain ATCC 15305 / DSM 20229 / NCIMB 8711 / NCTC 7292 / S-41), this protein is Large ribosomal subunit protein uL15.